Consider the following 87-residue polypeptide: Conotoxin Cl12.3 (87 aa).

The N-terminal stretch at 1–19 (MKLTCVLVVLLLFLPYGDL) is a signal peptide. The propeptide occupies 20 to 42 (ITNNYIGGAARKVTPWRRNLKTR).

This sequence belongs to the conotoxin O1 superfamily. Post-translationally, contains 4 disulfide bonds. In terms of tissue distribution, expressed by the venom duct.

It localises to the secreted. This is Conotoxin Cl12.3 from Californiconus californicus (California cone).